Here is a 319-residue protein sequence, read N- to C-terminus: Beta-ketoacyl-[acyl-carrier-protein] synthase III (319 aa).

Catalysis depends on residues Cys110 and His246. An ACP-binding region spans residues 247–251 (QANYR). Residue Asn276 is part of the active site.

The protein belongs to the thiolase-like superfamily. FabH family. As to quaternary structure, homodimer.

It localises to the cytoplasm. It catalyses the reaction malonyl-[ACP] + acetyl-CoA + H(+) = 3-oxobutanoyl-[ACP] + CO2 + CoA. The protein operates within lipid metabolism; fatty acid biosynthesis. Functionally, catalyzes the condensation reaction of fatty acid synthesis by the addition to an acyl acceptor of two carbons from malonyl-ACP. Catalyzes the first condensation reaction which initiates fatty acid synthesis and may therefore play a role in governing the total rate of fatty acid production. Possesses both acetoacetyl-ACP synthase and acetyl transacylase activities. Its substrate specificity determines the biosynthesis of branched-chain and/or straight-chain of fatty acids. The protein is Beta-ketoacyl-[acyl-carrier-protein] synthase III of Lactobacillus delbrueckii subsp. bulgaricus (strain ATCC BAA-365 / Lb-18).